The chain runs to 150 residues: Spore germination protein GerT (150 aa).

The protein localises to the spore coat. In terms of biological role, involved in spore germination. The protein is Spore germination protein GerT (gerT) of Bacillus licheniformis (strain ATCC 14580 / DSM 13 / JCM 2505 / CCUG 7422 / NBRC 12200 / NCIMB 9375 / NCTC 10341 / NRRL NRS-1264 / Gibson 46).